The following is a 318-amino-acid chain: L-lactate dehydrogenase (318 aa).

NAD(+) contacts are provided by residues valine 18, aspartate 39, lysine 44, tyrosine 69, and 83-84; that span reads GA. Substrate-binding residues include glutamine 86 and arginine 92. NAD(+)-binding positions include serine 105, 122 to 124, and serine 147; that span reads VSN. 124–127 is a binding site for substrate; the sequence is NPVD. 152 to 155 is a binding site for substrate; the sequence is DTSR. Residue histidine 179 is the Proton acceptor of the active site. A Phosphotyrosine modification is found at tyrosine 225. Threonine 234 is a substrate binding site.

Belongs to the LDH/MDH superfamily. LDH family. In terms of assembly, homotetramer.

Its subcellular location is the cytoplasm. The catalysed reaction is (S)-lactate + NAD(+) = pyruvate + NADH + H(+). Its pathway is fermentation; pyruvate fermentation to lactate; (S)-lactate from pyruvate: step 1/1. Its function is as follows. Catalyzes the conversion of lactate to pyruvate. The polypeptide is L-lactate dehydrogenase (Clostridium botulinum (strain ATCC 19397 / Type A)).